The following is a 104-amino-acid chain: uncharacterized protein (104 aa).

A disordered region spans residues 51–70; it reads NPGRSLDNNKDVSDKGRSEF. Over residues 57-70 the composition is skewed to basic and acidic residues; the sequence is DNNKDVSDKGRSEF.

Belongs to the protein-tyrosine phosphatase family.

This is an uncharacterized protein from Xanthomonas campestris pv. campestris (strain ATCC 33913 / DSM 3586 / NCPPB 528 / LMG 568 / P 25).